The following is a 145-amino-acid chain: UPF0201 protein LS215_1276 (145 aa).

Belongs to the UPF0201 family.

In Saccharolobus islandicus (strain L.S.2.15 / Lassen #1) (Sulfolobus islandicus), this protein is UPF0201 protein LS215_1276.